The primary structure comprises 265 residues: Type II pantothenate kinase (265 aa).

Residue 6-13 participates in ATP binding; it reads DAGGTLIK. Catalysis depends on Glu-70, which acts as the Proton acceptor. ATP contacts are provided by residues Thr-99, 121-125, Tyr-137, and Ser-225; that span reads GGMIQ.

This sequence belongs to the type II pantothenate kinase family. Homodimer.

The protein localises to the cytoplasm. It catalyses the reaction (R)-pantothenate + ATP = (R)-4'-phosphopantothenate + ADP + H(+). The protein operates within cofactor biosynthesis; coenzyme A biosynthesis; CoA from (R)-pantothenate: step 1/5. Its function is as follows. Catalyzes the phosphorylation of pantothenate (Pan), the first step in CoA biosynthesis. The sequence is that of Type II pantothenate kinase from Staphylococcus epidermidis (strain ATCC 35984 / DSM 28319 / BCRC 17069 / CCUG 31568 / BM 3577 / RP62A).